Reading from the N-terminus, the 103-residue chain is NADH-quinone oxidoreductase subunit K 1 (103 aa).

Helical transmembrane passes span 6–26 (LGHF…GIFL), 32–52 (IIIL…LVAF), and 67–87 (LVLT…VVFF).

The protein belongs to the complex I subunit 4L family. NDH-1 is composed of 14 different subunits. Subunits NuoA, H, J, K, L, M, N constitute the membrane sector of the complex.

It is found in the cell inner membrane. It carries out the reaction a quinone + NADH + 5 H(+)(in) = a quinol + NAD(+) + 4 H(+)(out). In terms of biological role, NDH-1 shuttles electrons from NADH, via FMN and iron-sulfur (Fe-S) centers, to quinones in the respiratory chain. The immediate electron acceptor for the enzyme in this species is believed to be ubiquinone. Couples the redox reaction to proton translocation (for every two electrons transferred, four hydrogen ions are translocated across the cytoplasmic membrane), and thus conserves the redox energy in a proton gradient. The chain is NADH-quinone oxidoreductase subunit K 1 from Rhodopseudomonas palustris (strain ATCC BAA-98 / CGA009).